The primary structure comprises 445 residues: MTNPMMSVSSLLTSGQQKVPMVPSPFGPPIVDRDVLSSSIAPTDPSQFCVPSQFGSSGLPNANMPNPLSSHFYSGWGILPPEPIKAVTTRNEMFERHHAARAEMEMYSLYQQRRMERVNPKGLSGLGIPLFYGSSCLGGPTGFQGRSTLPASDVHLHRSTFRHLQGNPILLATRPHFTECWGQKYRLRRGAVYQKPPESDTESFKSQAEEKSSSQMPTLSYEEEEYIKDPDIEVDNQQKPRVADGKPTTVPANPHGELHTHQRKPSSLEANAWDDGKGKPSEQVYEGCDGKNGVFRPVSILPLSGTHEQVALRENCSLSDIQKWTVDDVYNFIRSLPGCSDYAQVFKDHAIDGETLPLLTEQHLRGTMGLKLGPALKIQSQVSQHVGNMFCKKLPSLPTHARQAFDQPADTSPLLDMSSWSDGLSIPGPQDLLSPKRTEQDVMRN.

The interval His98–Ala172 is required for localization to nuclear polycomb bodies. A disordered region spans residues Tyr193–Glu282. Residues Ile227 to Asp244 show a composition bias toward basic and acidic residues. The region spanning Trp324–Ile378 is the SAM domain. The segment at Ser425 to Asn445 is disordered. Residues Ser434–Asn445 are compositionally biased toward basic and acidic residues.

In terms of assembly, monomer, homodimer and homooligomer. Component of a Polycomb group (PcG) multiprotein PRC1-like complex. Interacts with PHC2 and NR2E3. Interacts with RNF1 in a PHC2-dependent manner. Interacts with SAMD11. In terms of tissue distribution, expressed in the retina and the pineal gland. In the retina, it is predominantly expressed in the outer nuclear layer and developing rod photoreceptors.

It localises to the nucleus. It is found in the cytoplasm. Its function is as follows. Component of a Polycomb group (PcG) multiprotein PRC1-like complex, essential for establishing rod photoreceptor cell identity and function by silencing nonrod gene expression in developing rod photoreceptor cells. Via its association with the PRC1-like complex, promotes epigenetic repressive marks H3K27me3 and H2AK119ub marks in nonrod genes, silencing their transcription. Represses Crx-controlled photoreceptor-specific gene expression. This Mus musculus (Mouse) protein is Sterile alpha motif domain-containing protein 7 (Samd7).